The primary structure comprises 204 residues: Lipid A acyltransferase PagP (204 aa).

A signal peptide spans methionine 1–alanine 25. Active-site residues include histidine 76, aspartate 119, and serine 120.

It belongs to the lipid A palmitoyltransferase family. As to quaternary structure, homodimer.

Its subcellular location is the cell outer membrane. The enzyme catalyses a lipid A + a 1,2-diacyl-sn-glycero-3-phosphocholine = a hepta-acyl lipid A + a 2-acyl-sn-glycero-3-phosphocholine. The catalysed reaction is a lipid IVA + a 1,2-diacyl-sn-glycero-3-phosphocholine = a lipid IVB + a 2-acyl-sn-glycero-3-phosphocholine. It carries out the reaction a lipid IIA + a 1,2-diacyl-sn-glycero-3-phosphocholine = a lipid IIB + a 2-acyl-sn-glycero-3-phosphocholine. Transfers a fatty acid residue from the sn-1 position of a phospholipid to the N-linked hydroxyfatty acid chain on the proximal unit of lipid A or its precursors. This Yersinia enterocolitica serotype O:8 / biotype 1B (strain NCTC 13174 / 8081) protein is Lipid A acyltransferase PagP.